Reading from the N-terminus, the 173-residue chain is MSIILGIDPGSRITGYGVIRQNGRHLYYLGSGCIRTSEKELPGRLKQIYAGVSEIITQFQPDVFAIEQVFMSKNADSALKLGQARGSAIVAAVNADLPVHEYAARLIKQAVTGNGGADKSMVQNMVMSMLKLPAKPQADAADALGVAITHANTNKTLVALAGKATGARKGRYR.

Active-site residues include Asp8, Glu67, and Asp139. 3 residues coordinate Mg(2+): Asp8, Glu67, and Asp139.

This sequence belongs to the RuvC family. As to quaternary structure, homodimer which binds Holliday junction (HJ) DNA. The HJ becomes 2-fold symmetrical on binding to RuvC with unstacked arms; it has a different conformation from HJ DNA in complex with RuvA. In the full resolvosome a probable DNA-RuvA(4)-RuvB(12)-RuvC(2) complex forms which resolves the HJ. It depends on Mg(2+) as a cofactor.

The protein localises to the cytoplasm. It catalyses the reaction Endonucleolytic cleavage at a junction such as a reciprocal single-stranded crossover between two homologous DNA duplexes (Holliday junction).. In terms of biological role, the RuvA-RuvB-RuvC complex processes Holliday junction (HJ) DNA during genetic recombination and DNA repair. Endonuclease that resolves HJ intermediates. Cleaves cruciform DNA by making single-stranded nicks across the HJ at symmetrical positions within the homologous arms, yielding a 5'-phosphate and a 3'-hydroxyl group; requires a central core of homology in the junction. The consensus cleavage sequence is 5'-(A/T)TT(C/G)-3'. Cleavage occurs on the 3'-side of the TT dinucleotide at the point of strand exchange. HJ branch migration catalyzed by RuvA-RuvB allows RuvC to scan DNA until it finds its consensus sequence, where it cleaves and resolves the cruciform DNA. The protein is Crossover junction endodeoxyribonuclease RuvC of Vibrio atlanticus (strain LGP32) (Vibrio splendidus (strain Mel32)).